The sequence spans 239 residues: 7-cyano-7-deazaguanine synthase (239 aa).

13–23 is an ATP binding site; the sequence is FSGGQDSTTCL. Residues Cys192, Cys201, Cys204, and Cys207 each contribute to the Zn(2+) site.

This sequence belongs to the QueC family. The cofactor is Zn(2+).

It catalyses the reaction 7-carboxy-7-deazaguanine + NH4(+) + ATP = 7-cyano-7-deazaguanine + ADP + phosphate + H2O + H(+). The protein operates within purine metabolism; 7-cyano-7-deazaguanine biosynthesis. In terms of biological role, catalyzes the ATP-dependent conversion of 7-carboxy-7-deazaguanine (CDG) to 7-cyano-7-deazaguanine (preQ(0)). This chain is 7-cyano-7-deazaguanine synthase, found in Shewanella sp. (strain MR-4).